A 279-amino-acid polypeptide reads, in one-letter code: Energy-coupling factor transporter ATP-binding protein EcfA1 (279 aa).

Residues 5-240 (ITVNNLFFKY…GNRLISLGLD (236 aa)) enclose the ABC transporter domain. Position 40–47 (40–47 (GHNGSGKS)) interacts with ATP.

Belongs to the ABC transporter superfamily. Energy-coupling factor EcfA family. In terms of assembly, forms a stable energy-coupling factor (ECF) transporter complex composed of 2 membrane-embedded substrate-binding proteins (S component), 2 ATP-binding proteins (A component) and 2 transmembrane proteins (T component).

It localises to the cell membrane. Functionally, ATP-binding (A) component of a common energy-coupling factor (ECF) ABC-transporter complex. Unlike classic ABC transporters this ECF transporter provides the energy necessary to transport a number of different substrates. The polypeptide is Energy-coupling factor transporter ATP-binding protein EcfA1 (Streptococcus agalactiae serotype Ia (strain ATCC 27591 / A909 / CDC SS700)).